Reading from the N-terminus, the 462-residue chain is Zinc transporter 6-B (462 aa).

The Cytoplasmic portion of the chain corresponds to 1–33 (MGTIYLFRKTQRSLLGKLTQEFRLVTADRRSWK). Residues 34-54 (ILLFGAINVVCTGFLLTWCSS) form a helical membrane-spanning segment. At 55–64 (TNSMALTAYT) the chain is on the extracellular side. The helical transmembrane segment at 65-85 (YLTIFDLFSLITSLISYWVMM) threads the bilayer. The Cytoplasmic segment spans residues 86–98 (KKPSPTYSFGFER). A helical transmembrane segment spans residues 99–119 (LEVLAVFASTVLAQLGALFIL). The Extracellular portion of the chain corresponds to 120-134 (KESAERFLEQPEIHT). Residues 135–155 (GRLLVGTFVALFFNLFTMLSI) traverse the membrane as a helical segment. At 156 to 200 (RNKPFAYVSEAASTSWLQEHVADLSRSLCGVIPGLSSIFLPRMNP) the chain is on the cytoplasmic side. Residues 201–221 (FVLIDIAGALALCITYMLIEI) traverse the membrane as a helical segment. The Extracellular portion of the chain corresponds to 222 to 223 (NN). The helical transmembrane segment at 224–244 (YFAVDTASAIAIAVMTFGTMY) threads the bilayer. Over 245–462 (PMSVYSGKVL…TPGQFTQFRQ (218 aa)) the chain is Cytoplasmic.

Belongs to the cation diffusion facilitator (CDF) transporter (TC 2.A.4) family. SLC30A subfamily. As to quaternary structure, heterodimer with SLC30A5; form a functional zinc ion transmembrane transporter.

It is found in the golgi apparatus. It localises to the trans-Golgi network membrane. Its function is as follows. Has probably no intrinsic transporter activity but together with SLC30A5 forms a functional zinc ion:proton antiporter heterodimer, mediating zinc entry into the lumen of organelles along the secretory pathway. As part of that zinc ion:proton antiporter, contributes to zinc ion homeostasis within the early secretory pathway and regulates the activation and folding of enzymes like alkaline phosphatases and enzymes involved in phosphatidylinositol glycan anchor biosynthesis. The protein is Zinc transporter 6-B (slc30a6-b) of Xenopus laevis (African clawed frog).